The sequence spans 150 residues: Large ribosomal subunit protein bL9 (150 aa).

It belongs to the bacterial ribosomal protein bL9 family.

Functionally, binds to the 23S rRNA. The sequence is that of Large ribosomal subunit protein bL9 from Limosilactobacillus fermentum (strain NBRC 3956 / LMG 18251) (Lactobacillus fermentum).